We begin with the raw amino-acid sequence, 304 residues long: 4-diphosphocytidyl-2-C-methyl-D-erythritol kinase (304 aa).

K23 is an active-site residue. P111–S121 serves as a coordination point for ATP. Residue D153 is part of the active site.

It belongs to the GHMP kinase family. IspE subfamily. In terms of assembly, homodimer.

The catalysed reaction is 4-CDP-2-C-methyl-D-erythritol + ATP = 4-CDP-2-C-methyl-D-erythritol 2-phosphate + ADP + H(+). The protein operates within isoprenoid biosynthesis; isopentenyl diphosphate biosynthesis via DXP pathway; isopentenyl diphosphate from 1-deoxy-D-xylulose 5-phosphate: step 3/6. Functionally, catalyzes the phosphorylation of the position 2 hydroxy group of 4-diphosphocytidyl-2C-methyl-D-erythritol. This Wigglesworthia glossinidia brevipalpis protein is 4-diphosphocytidyl-2-C-methyl-D-erythritol kinase.